A 471-amino-acid polypeptide reads, in one-letter code: UDP-glycosyltransferase CGT (471 aa).

Catalysis depends on H24, which acts as the Proton acceptor. H24 is an an anthocyanidin binding site. D120 functions as the Charge relay in the catalytic mechanism. T143 lines the UDP-alpha-D-glucose pocket. The UDP stretch occupies residues 280 to 281 (SR). Residues V343, Q345, H360, W363, N364, S365, and E368 each coordinate UDP-alpha-D-glucose. Residue G383 coordinates an anthocyanidin. Residues D384 and Q385 each contribute to the UDP-alpha-D-glucose site.

It belongs to the UDP-glycosyltransferase family.

It carries out the reaction a 3'-hydro-2'-hydroxy-beta-oxodihydrochalcone + UDP-alpha-D-glucose = a 3'-(beta-D-glucopyranosyl)-2'-hydroxy-beta-oxodihydrochalcone + UDP + H(+). In terms of biological role, UDP-glucose-dependent glucosyltransferase catalyzing the c-glucosylation of 2-hydroxyflavanones. This Oryza sativa subsp. japonica (Rice) protein is UDP-glycosyltransferase CGT.